Here is a 196-residue protein sequence, read N- to C-terminus: DnaA initiator-associating protein DiaA (196 aa).

In terms of domain architecture, SIS spans 34–196 (LVQSLLNGNK…DNTLFPHQAD (163 aa)).

It belongs to the SIS family. DiaA subfamily. Homotetramer; dimer of dimers.

In terms of biological role, required for the timely initiation of chromosomal replication via direct interactions with the DnaA initiator protein. In Edwardsiella ictaluri (strain 93-146), this protein is DnaA initiator-associating protein DiaA.